Consider the following 604-residue polypeptide: Acetylcholinesterase 4 (604 aa).

Positions 1 to 23 (MKPKLVFLPFLIFITVFIEESEA) are cleaved as a signal peptide. A disulfide bridge connects residues cysteine 88 and cysteine 115. N-linked (GlcNAc...) asparagine glycans are attached at residues asparagine 96 and asparagine 128. Catalysis depends on serine 219, which acts as the Acyl-ester intermediate. Cysteine 273 and cysteine 284 are disulfide-bonded. 2 N-linked (GlcNAc...) asparagine glycosylation sites follow: asparagine 274 and asparagine 299. Glutamate 347 serves as the catalytic Charge relay system. N-linked (GlcNAc...) asparagine glycosylation is found at asparagine 400 and asparagine 446. The cysteines at positions 426 and 561 are disulfide-linked. Histidine 477 serves as the catalytic Charge relay system.

The protein belongs to the type-B carboxylesterase/lipase family.

The protein localises to the synapse. It is found in the secreted. It localises to the cell membrane. The enzyme catalyses acetylcholine + H2O = choline + acetate + H(+). Its function is as follows. Rapidly hydrolyzes choline released into the synapse. The polypeptide is Acetylcholinesterase 4 (ace-4) (Caenorhabditis briggsae).